The sequence spans 667 residues: Primary amine oxidase (667 aa).

The N-terminal stretch at 1 to 18 (KFALFSVLTLLSFHAVFS) is a signal peptide. N-linked (GlcNAc...) asparagine glycosylation is present at Asn-149. A disulfide bridge links Cys-155 with Cys-176. The tract at residues 216 to 246 (PTAENTEYQVSKQSPPFGPKQHSLTSHQPQG) is disordered. Over residues 218-229 (AENTEYQVSKQS) the composition is skewed to polar residues. An N-linked (GlcNAc...) asparagine glycan is attached at Asn-252. 316–327 (FFDSGEFGFGLS) contacts substrate. The Proton acceptor role is filled by Asp-318. A disulfide bond links Cys-337 and Cys-363. An N-linked (GlcNAc...) asparagine glycan is attached at Asn-382. 402–407 (VGNYDN) provides a ligand contact to substrate. Catalysis depends on Tyr-405, which acts as the Schiff-base intermediate with substrate; via topaquinone. Tyr-405 is subject to 2',4',5'-topaquinone. Positions 460 and 462 each coordinate Cu cation. Residues Asp-469, Phe-470, and Asp-471 each coordinate Mn(2+). The N-linked (GlcNAc...) asparagine glycan is linked to Asn-576. Positions 610 and 611 each coordinate Mn(2+). His-621 serves as a coordination point for Cu cation.

It belongs to the copper/topaquinone oxidase family. Homodimer. Requires Cu cation as cofactor. Zn(2+) serves as cofactor. The cofactor is L-topaquinone. Mn(2+) is required as a cofactor. Glycosylated; contains two carbohydrate chains per monomer. In terms of processing, topaquinone (TPQ) is generated by copper-dependent autoxidation of a specific tyrosyl residue.

It catalyses the reaction a primary methyl amine + O2 + H2O = an aldehyde + H2O2 + NH4(+). This is Primary amine oxidase from Lens culinaris (Lentil).